The chain runs to 596 residues: Histone deacetylase 9 (596 aa).

Composition is skewed to basic and acidic residues over residues 132–153 and 160–172; these read REKE…HRQE and RSKD…AVAS. Disordered regions lie at residues 132 to 172, 214 to 258, 293 to 313, and 522 to 596; these read REKE…AVAS, HTSL…VRSR, SSVS…GPVA, and QPEG…QQVT. The interaction with mef2 stretch occupies residues 172-222; it reads STEVKQKLQEFILSKSATKEPLTNGTSHSMGRHPKLWYTAAHHTSLDQSSP. Over residues 221 to 237 the composition is skewed to pro residues; it reads SPPPSGTSPTYKCPPPG. A compositionally biased stretch (low complexity) spans 293 to 312; that stretch reads SSVSSSSPVSGPSSPNNGPV. A compositionally biased stretch (basic and acidic residues) spans 522–536; the sequence is QPEGHLEEAEEDLHG. The span at 541-558 shows a compositional bias: polar residues; the sequence is QEKSSSIDNTRSYSSTDL. Residues 567–585 show a composition bias toward basic and acidic residues; that stretch reads KVKEEPPDSENEIKTHLQS. Polar residues predominate over residues 586–596; sequence EQKSVFAQQVT.

The protein belongs to the histone deacetylase family. HD type 2 subfamily. In terms of assembly, homodimer. Interacts with mef2. As to expression, broadly expressed.

Its subcellular location is the nucleus. The catalysed reaction is N(6)-acetyl-L-lysyl-[histone] + H2O = L-lysyl-[histone] + acetate. Functionally, devoided of intrinsic deacetylase activity, promotes the deacetylation of lysine residues on the N-terminal part of the core histones (H2A, H2B, H3 and H4) by recruiting other histone deacetylases. Histone deacetylation gives a tag for epigenetic repression and plays an important role in transcriptional regulation, cell cycle progression and developmental events. Represses MEF2-dependent transcription. This is Histone deacetylase 9 (hdac9) from Xenopus laevis (African clawed frog).